The primary structure comprises 112 residues: Putative pterin-4-alpha-carbinolamine dehydratase (112 aa).

The protein belongs to the pterin-4-alpha-carbinolamine dehydratase family.

It carries out the reaction (4aS,6R)-4a-hydroxy-L-erythro-5,6,7,8-tetrahydrobiopterin = (6R)-L-erythro-6,7-dihydrobiopterin + H2O. In Syntrophotalea carbinolica (strain DSM 2380 / NBRC 103641 / GraBd1) (Pelobacter carbinolicus), this protein is Putative pterin-4-alpha-carbinolamine dehydratase.